The following is a 154-amino-acid chain: Transcriptional repressor NrdR (154 aa).

Residues Cys3 to Cys34 fold into a zinc finger. The region spanning Pro49–Glu139 is the ATP-cone domain.

It belongs to the NrdR family. Zn(2+) serves as cofactor.

Its function is as follows. Negatively regulates transcription of bacterial ribonucleotide reductase nrd genes and operons by binding to NrdR-boxes. This chain is Transcriptional repressor NrdR, found in Azotobacter vinelandii (strain DJ / ATCC BAA-1303).